Consider the following 123-residue polypeptide: Holo-[acyl-carrier-protein] synthase (123 aa).

Residues D8 and E56 each contribute to the Mg(2+) site.

This sequence belongs to the P-Pant transferase superfamily. AcpS family. It depends on Mg(2+) as a cofactor.

The protein localises to the cytoplasm. It carries out the reaction apo-[ACP] + CoA = holo-[ACP] + adenosine 3',5'-bisphosphate + H(+). Functionally, transfers the 4'-phosphopantetheine moiety from coenzyme A to a Ser of acyl-carrier-protein. This is Holo-[acyl-carrier-protein] synthase from Clostridium botulinum (strain Alaska E43 / Type E3).